We begin with the raw amino-acid sequence, 264 residues long: Thymidylate synthase (264 aa).

Arg21 contacts dUMP. His51 lines the (6R)-5,10-methylene-5,6,7,8-tetrahydrofolate pocket. 126–127 is a dUMP binding site; sequence RR. Cys146 serves as the catalytic Nucleophile. DUMP contacts are provided by residues 166-169, Asn177, and 207-209; these read RSAD and HLY. Asp169 provides a ligand contact to (6R)-5,10-methylene-5,6,7,8-tetrahydrofolate. Ala263 is a (6R)-5,10-methylene-5,6,7,8-tetrahydrofolate binding site.

Belongs to the thymidylate synthase family. Bacterial-type ThyA subfamily. Homodimer.

It localises to the cytoplasm. The enzyme catalyses dUMP + (6R)-5,10-methylene-5,6,7,8-tetrahydrofolate = 7,8-dihydrofolate + dTMP. It participates in pyrimidine metabolism; dTTP biosynthesis. Functionally, catalyzes the reductive methylation of 2'-deoxyuridine-5'-monophosphate (dUMP) to 2'-deoxythymidine-5'-monophosphate (dTMP) while utilizing 5,10-methylenetetrahydrofolate (mTHF) as the methyl donor and reductant in the reaction, yielding dihydrofolate (DHF) as a by-product. This enzymatic reaction provides an intracellular de novo source of dTMP, an essential precursor for DNA biosynthesis. In Mesorhizobium japonicum (strain LMG 29417 / CECT 9101 / MAFF 303099) (Mesorhizobium loti (strain MAFF 303099)), this protein is Thymidylate synthase.